A 289-amino-acid chain; its full sequence is Membrane protein insertase YidC (289 aa).

The first 19 residues, Met-1 to Gly-19, serve as a signal peptide directing secretion. A lipid anchor (N-palmitoyl cysteine) is attached at Cys-20. Cys-20 carries S-diacylglycerol cysteine lipidation. 5 helical membrane passes run Tyr-55–Leu-75, Met-133–Leu-153, Ile-177–Ser-197, Met-210–Leu-230, and Tyr-231–Ser-251. Positions Glu-268 to Lys-289 are disordered.

This sequence belongs to the OXA1/ALB3/YidC family. Type 2 subfamily.

It localises to the cell membrane. Functionally, required for the insertion and/or proper folding and/or complex formation of integral membrane proteins into the membrane. Involved in integration of membrane proteins that insert both dependently and independently of the Sec translocase complex, as well as at least some lipoproteins. The sequence is that of Membrane protein insertase YidC from Staphylococcus carnosus (strain TM300).